The chain runs to 1729 residues: Zinc finger CCCH domain-containing protein 13 (1729 aa).

2 disordered regions span residues 1-40 (MSKI…TTET) and 57-156 (CRFI…NGDI). Residues 10–23 (VENTKTISESTSRR) are compositionally biased toward polar residues. The C3H1-type zinc finger occupies 36 to 64 (STTETQCRNWLKTGSCLYGNTCRFIHGPS). Phosphoserine occurs at positions 64 and 77. Positions 76–136 (RSPERPTGDL…IKIVKERTPE (61 aa)) are enriched in basic and acidic residues. Residues 162-196 (HELSLEMKRQKIQRELMKLEQENMDKREEIIIQKE) adopt a coiled-coil conformation. Residue K179 forms a Glycyl lysine isopeptide (Lys-Gly) (interchain with G-Cter in SUMO2) linkage. The segment covering 182–193 (QENMDKREEIII) has biased composition (basic and acidic residues). Disordered regions lie at residues 182-528 (QENM…IRDV) and 581-1527 (DVYQ…PISD). S198, S207, S209, and S211 each carry phosphoserine. Low complexity predominate over residues 204–213 (SKLSPSPSLR). Residues 214 to 224 (KSSKSPKRKSS) show a composition bias toward basic residues. S242 carries the phosphoserine modification. The span at 245-254 (LDQQRNSKGN) shows a compositional bias: polar residues. T263 bears the Phosphothreonine mark. S265 bears the Phosphoserine mark. A compositionally biased stretch (basic and acidic residues) spans 283–315 (KYKVKDRIEEKPRDGKDRGRDFEKQREKRDKPR). A phosphoserine mark is found at S316, S318, S324, and S327. Residues 321 to 345 (QHHSPLSSRHHSSSSQSGSSIQRHS) show a composition bias toward low complexity. Residues T353 and T363 each carry the phosphothreonine modification. Over residues 358–368 (YQRTLTPSLRR) the composition is skewed to polar residues. 3 positions are modified to phosphoserine: S369, S371, and S380. Basic and acidic residues-rich tracts occupy residues 393-528 (PMRE…IRDV) and 581-636 (DVYQ…EKGS). Positions 639–654 (TRGSQMDSHSSGSNYH) are enriched in polar residues. The segment covering 655 to 701 (DSWETRSSYPERDRYPERDTRDPARDSSFERRHGERDRRDNRERDQR) has biased composition (basic and acidic residues). S704 is subject to Phosphoserine. The stretch at 706–865 (IRHQGRSEEL…KERERQREWE (160 aa)) forms a coiled coil. Basic and acidic residues predominate over residues 710–897 (GRSEELERDE…IPRDSHEERK (188 aa)). A phosphoserine mark is found at S907, S909, S913, S921, S924, S929, S949, S951, and S953. The span at 920 to 938 (HSPDSDTYHSGDDKNEKHR) shows a compositional bias: basic and acidic residues. Over residues 957-1035 (LTEDRQGRWK…GSDRAHDEKK (79 aa)) the composition is skewed to basic and acidic residues. Position 958 is a phosphothreonine (T958). Basic residues predominate over residues 1036–1046 (KAKAPKKPVKK). Over residues 1047–1065 (KKEEDVGVERGNLETHEDS) the composition is skewed to basic and acidic residues. Phosphoserine is present on residues S1069, S1086, S1090, and S1093. Residues 1072 to 1086 (KGQKKKNIEKKRKRS) are compositionally biased toward basic residues. T1109 is modified (phosphothreonine). Basic and acidic residues-rich tracts occupy residues 1114 to 1137 (IKEE…KKEN) and 1149 to 1159 (PDRTEGLEAEH). Low complexity-rich tracts occupy residues 1160-1176 (TAAT…LSSL) and 1184-1218 (AAAS…TNGS). Residues 1228–1253 (ARGEKVEVSHVTLEDTPHRKLVDQKR) show a composition bias toward basic and acidic residues. A phosphoserine mark is found at S1256, S1259, S1273, and S1275. The span at 1278–1288 (SAHRSGDDQGS) shows a compositional bias: basic and acidic residues. S1295 is modified (phosphoserine). Basic and acidic residues-rich tracts occupy residues 1296 to 1351 (GSRD…DRQV) and 1359 to 1440 (DSRD…ERTF). Phosphoserine occurs at positions 1427, 1443, 1447, 1467, 1470, 1499, and 1526. Composition is skewed to basic and acidic residues over residues 1447–1482 (SGKR…DRDL) and 1490–1499 (DVSKAERTES).

It belongs to the ZC3H13 family. As to quaternary structure, component of the WMM complex, a N6-methyltransferase complex composed of a catalytic subcomplex, named MAC, and of an associated subcomplex, named MACOM. The MAC subcomplex is composed of METTL3 and METTL14. The MACOM subcomplex is composed of WTAP, ZC3H13, CBLL1/HAKAI, VIRMA, and, in some cases of RBM15 (RBM15 or RBM15B). Also a component of a MACOM-like complex, named WTAP complex, composed of WTAP, ZC3H13, CBLL1/HAKAI, VIRMA, RBM15, BCLAF1 and THRAP3.

It localises to the nucleus speckle. The protein localises to the nucleus. The protein resides in the nucleoplasm. Functionally, associated component of the WMM complex, a complex that mediates N6-methyladenosine (m6A) methylation of RNAs, a modification that plays a role in the efficiency of mRNA splicing and RNA processing. Acts as a key regulator of m6A methylation by promoting m6A methylation of mRNAs at the 3'-UTR. Controls embryonic stem cells (ESCs) pluripotency via its role in m6A methylation. In the WMM complex, anchors component of the MACOM subcomplex in the nucleus. Also required for bridging WTAP to the RNA-binding component RBM15 (RBM15 or RBM15B). This is Zinc finger CCCH domain-containing protein 13 from Mus musculus (Mouse).